The chain runs to 689 residues: FAST kinase domain-containing protein 2, mitochondrial (689 aa).

Phosphoserine occurs at positions 113 and 126. One can recognise an RAP domain in the interval 617–674; it reads VAVLCVPKSVYCLNSCHPRGLMAMKIRHLNVMGFHVILIHNWELKKLKMEDAVTFVRK.

It belongs to the FAST kinase family. As to quaternary structure, monomer. Found in a complex with GRSF1, DDX28, DHX30 and FASTKD5. Associates with the 16S mitochondrial rRNA (16S mt-rRNA). Forms a regulatory protein-RNA complex, consisting of RCC1L, NGRN, RPUSD3, RPUSD4, TRUB2, FASTKD2 and 16S mt-rRNA. In terms of tissue distribution, ubiquitously expressed. Expression detected in spleen, testis, colon, heart, smooth muscle, kidney, brain, lung, liver, brown and white adipose tissue with highest expression in testis, heart and smooth muscle.

The protein localises to the mitochondrion matrix. The protein resides in the mitochondrion nucleoid. In terms of biological role, plays an important role in assembly of the mitochondrial large ribosomal subunit. As a component of a functional protein-RNA module, consisting of RCC1L, NGRN, RPUSD3, RPUSD4, TRUB2, FASTKD2 and 16S mitochondrial ribosomal RNA (16S mt-rRNA), controls 16S mt-rRNA abundance and is required for intra-mitochondrial translation. May play a role in mitochondrial apoptosis. This chain is FAST kinase domain-containing protein 2, mitochondrial (Fastkd2), found in Mus musculus (Mouse).